Reading from the N-terminus, the 599-residue chain is Group II intron-encoded protein LtrA (599 aa).

Residues 70–361 (IIQSLKDGTY…QPARFLGYDI (292 aa)) enclose the Reverse transcriptase domain. Residues 381 to 549 (NGSVELLIPL…AKCCELCGTS (169 aa)) are intron maturase type-2.

The protein in the N-terminal section; belongs to the bacterial reverse transcriptase family. As to quaternary structure, homodimer. The cofactor is Mg(2+).

The enzyme catalyses DNA(n) + a 2'-deoxyribonucleoside 5'-triphosphate = DNA(n+1) + diphosphate. Multifunctional protein that promotes group II intron splicing and mobility by acting both on RNA and DNA. It has three activities: reverse transcriptase (RT) for intron duplication, maturase to promote splicing, and DNA endonuclease for site-specific cleavage of recipient alleles. The intron-encoded protein promotes splicing by facilitating the formation of the catalytically active structure of the intron RNA. After splicing, the protein remains bound to the excised intron lariat RNA, forming ribonucleoprotein particles, and cleaving the antisense strand of the recipient DNA in the 3' exon. After DNA cleavage, retrohoming occurs by a target DNA-primed reverse transcription of the intron RNA that had reverse spliced into the sense strand of the recipient DNA. It also contributes to the recognition of the DNA target site and acts as a repressor of its own translation. The polypeptide is Group II intron-encoded protein LtrA (ltrA) (Lactococcus lactis subsp. cremoris (Streptococcus cremoris)).